The following is a 651-amino-acid chain: UvrABC system protein C (651 aa).

The GIY-YIG domain occupies 21 to 100 (TEPGCYLMRD…IKNQQPHFNV (80 aa)). Residues 210–245 (DELRQLLNQQMERYAERLDFESAARIRDQLQGIDQL) form the UVR domain.

Belongs to the UvrC family. In terms of assembly, interacts with UvrB in an incision complex.

The protein localises to the cytoplasm. The UvrABC repair system catalyzes the recognition and processing of DNA lesions. UvrC both incises the 5' and 3' sides of the lesion. The N-terminal half is responsible for the 3' incision and the C-terminal half is responsible for the 5' incision. This is UvrABC system protein C from Synechococcus sp. (strain CC9311).